An 86-amino-acid polypeptide reads, in one-letter code: uncharacterized protein (86 aa).

Positions 1 to 21 (MLSNSTSRNRHSKHNKKNTRE) are disordered. Positions 8-17 (RNRHSKHNKK) are enriched in basic residues.

This is an uncharacterized protein from Acidianus convivator (ATV).